The primary structure comprises 221 residues: Zingipain-1 (221 aa).

3 cysteine pairs are disulfide-bonded: cysteine 24–cysteine 65, cysteine 58–cysteine 98, and cysteine 155–cysteine 206. Residue cysteine 27 is part of the active site. 2 N-linked (GlcNAc...) asparagine glycosylation sites follow: asparagine 95 and asparagine 156. Catalysis depends on residues histidine 161 and asparagine 181.

It belongs to the peptidase C1 family.

The catalysed reaction is Preferential cleavage of peptides with a proline residue at the P2 position.. Functionally, cysteine proteinase with a high level of diversity in substrate specificity, an amino acid bearing a proline residue at the P2 position is preferred. This is Zingipain-1 from Zingiber officinale (Ginger).